An 82-amino-acid chain; its full sequence is UPF0180 protein BH2667 (82 aa).

It belongs to the UPF0180 family.

This Halalkalibacterium halodurans (strain ATCC BAA-125 / DSM 18197 / FERM 7344 / JCM 9153 / C-125) (Bacillus halodurans) protein is UPF0180 protein BH2667.